Reading from the N-terminus, the 567-residue chain is Urease subunit alpha (567 aa).

In terms of domain architecture, Urease spans 129-567 (GGIDTHIHFI…LPMAQRYFLF (439 aa)). Ni(2+) contacts are provided by His-134, His-136, and Lys-217. Position 217 is an N6-carboxylysine (Lys-217). His-219 is a substrate binding site. Residues His-246 and His-272 each contribute to the Ni(2+) site. His-320 functions as the Proton donor in the catalytic mechanism. Position 360 (Asp-360) interacts with Ni(2+).

It belongs to the metallo-dependent hydrolases superfamily. Urease alpha subunit family. Heterotrimer of UreA (gamma), UreB (beta) and UreC (alpha) subunits. Three heterotrimers associate to form the active enzyme. The cofactor is Ni cation. Carboxylation allows a single lysine to coordinate two nickel ions.

It localises to the cytoplasm. It catalyses the reaction urea + 2 H2O + H(+) = hydrogencarbonate + 2 NH4(+). The protein operates within nitrogen metabolism; urea degradation; CO(2) and NH(3) from urea (urease route): step 1/1. The polypeptide is Urease subunit alpha (Delftia acidovorans (strain DSM 14801 / SPH-1)).